Here is a 631-residue protein sequence, read N- to C-terminus: MEDADGLSFDFEGGLDSGPVQNTASVPVAPPENSSSAAVNVAPTYDHSSATVAGAGRGRSFRQTVCRHWLRGLCMKGDACGFLHQFDKARMPICRFFRLYGECREQDCVYKHTNEDIKECNMYKLGFCPNGPDCRYRHAKLPGPPPPVEEVLQKIQQLTTYNYGTNRLYQARNVAPQLQDRPQGQVPMQGQPQESGNLQQQQQQQPQQSQHQVSQTLIPNPADQTNRTSHPLPQGVNRYFVVKSNNRENFELSVQQGVWATQRSNEAKLNEAFDSVENVILIFSVNRTRHFQGCAKMTSRIGGYIGGGNWKHEHGTAQYGRNFSVKWLKLCELSFHKTRNLRNPYNENLPVKISRDCQELEPSVGEQLASLLYLEPDSELMAISIAAEAKREEEKAKGVNPESRAENPDIVPFEDNEEEEEEEDESEEEEESMAGGPQGRGRGRGIMWPPQMPLGRGIRPMPGMGGFPLGVMGPGDAFPYGPGGYNGMPDPFGMGPRPFGPYGPRFGGDFRGPVPGMMFPGRPPQQFPHGGYGMMGGGRGPHMGGMGNAPRGGRPMYYPPATSSARPGPSNRKTPERSDERGVSGDQQNQDASHDMEQFEVGNSLRNEESESEDEDEAPRRSRHGEGKKRR.

The segment at 12–38 is disordered; the sequence is EGGLDSGPVQNTASVPVAPPENSSSAA. C3H1-type zinc fingers lie at residues 60–87, 88–112, and 114–141; these read SFRQ…HQFD, KARM…VYKH, and NEDI…HAKL. Residues 179–234 form a disordered region; sequence QDRPQGQVPMQGQPQESGNLQQQQQQQPQQSQHQVSQTLIPNPADQTNRTSHPLPQ. The span at 182–215 shows a compositional bias: low complexity; that stretch reads PQGQVPMQGQPQESGNLQQQQQQQPQQSQHQVSQ. Residues 216–231 show a composition bias toward polar residues; that stretch reads TLIPNPADQTNRTSHP. A YTH domain is found at 237-372; the sequence is NRYFVVKSNN…SVGEQLASLL (136 aa). Over residues 392–407 the composition is skewed to basic and acidic residues; it reads EEEKAKGVNPESRAEN. Disordered regions lie at residues 392 to 447 and 541 to 631; these read EEEK…RGIM and PHMG…KKRR. Acidic residues predominate over residues 412 to 432; that stretch reads PFEDNEEEEEEEDESEEEEES. Residues 573-583 are compositionally biased toward basic and acidic residues; sequence KTPERSDERGV. Phosphoserine is present on residues serine 610 and serine 612. A compositionally biased stretch (basic residues) spans 621-631; the sequence is RSRHGEGKKRR.

It belongs to the CPSF4/YTH1 family. In terms of assembly, component of the cleavage and polyadenylation specificity factor (CPSF) complex. Can form homodimers. Binds to calmodulin. Forms a complex with cleavage and polyadenylation specificity factor (CPSF) subunits CPSF73-I, CPSF73-II, CPSF100, CPSF160, CFIS2, FIPS3, FIPS5, PAPS2, PAPS3, CLPS3, PCFS1, PCFS4, CSTF50 and CSTF77. In terms of tissue distribution, expressed in seedlings, roots, leaves, siliques, stems and flowers.

Its subcellular location is the nucleus. The protein resides in the cytoplasm. Endonuclease activity is repressed by the N-terminal domain of FIPS5. Nuclease activity is inhibited by zinc (&gt;100 uM), cadmium in a progressive manner (50 percent activity at 1 mM Cd(2+)), and high salt levels (e.g. KCl or NaCl &gt;600 mM). Stimulated by ATP in the presence of Zn(2+), even at inhibitory zinc concentrations. Elevated temperatures prevent RNA-binding at 55 degrees Celsius, but endonuclease activity at 70 degrees Celsius. The sulfhydryl reagent dithiothreitol (DTT) inhibits both RNA-binding and nuclease activities. Its function is as follows. Component of the cleavage and polyadenylation specificity factor (CPSF) complex that play a key role in pre-mRNA 3'-end formation. May interact with poly(A) polymerase and other factors to bring about cleavage and poly(A) addition. Mediates poly(A) site selection. Binds RNA in a calcium-dependent manner. Exhibits endonuclease activity with an ability to nick and degrade linear as well as circular single-stranded RNA that leaves RNA 3' ends with hydroxyl groups, thus mediating processing of the pre-mRNA as a prelude to the polyadenylation. Involved in the post-transcriptional control, probably via poly(A) addition, of the responses of plants to stress, especially genes mediating tolerance to oxidative stress. Plays a role in the regulation of salicylic acid (SA) production via the control of messenger RNA 3' end processing, thus being a key component of programmed cell death and plant immune responses required for resistance to virulent Pseudomonas syringae pv tomato DC3000 (Pst). This is 30-kDa cleavage and polyadenylation specificity factor 30 from Arabidopsis thaliana (Mouse-ear cress).